We begin with the raw amino-acid sequence, 168 residues long: HTH-type transcriptional regulator IscR (168 aa).

Residues 2 to 131 enclose the HTH rrf2-type domain; it reads KLTSKGRYAV…NNITLGELMT (130 aa). Positions 28–51 form a DNA-binding region, H-T-H motif; the sequence is LADISERQGISLSYLEQLFSKLRK. The [2Fe-2S] cluster site is built by C92, C98, and C104.

It depends on [2Fe-2S] cluster as a cofactor.

Its function is as follows. Regulates the transcription of several operons and genes involved in the biogenesis of Fe-S clusters and Fe-S-containing proteins. This is HTH-type transcriptional regulator IscR from Vibrio parahaemolyticus serotype O3:K6 (strain RIMD 2210633).